The following is a 38-amino-acid chain: U9-ctenitoxin-Pk1a (38 aa).

Disulfide bonds link C2–C17, C9–C22, C16–C36, and C24–C34.

As to expression, expressed by the venom gland.

It localises to the secreted. In Phoneutria keyserlingi (Brazilian wandering spider), this protein is U9-ctenitoxin-Pk1a.